Reading from the N-terminus, the 441-residue chain is Eukaryotic translation initiation factor 3 subunit M (441 aa).

The region spanning 196–365 (ESEQAYTYLL…QTFLIHRSTY (170 aa)) is the PCI domain. Positions 405–418 (KEEEANKADNKYDS) are enriched in basic and acidic residues. The tract at residues 405–441 (KEEEANKADNKYDSARGFQRGGQRKQPRALDDDMGLE) is disordered.

Belongs to the eIF-3 subunit M family. In terms of assembly, component of the eukaryotic translation initiation factor 3 (eIF-3) complex.

The protein localises to the cytoplasm. Component of the eukaryotic translation initiation factor 3 (eIF-3) complex, which is involved in protein synthesis of a specialized repertoire of mRNAs and, together with other initiation factors, stimulates binding of mRNA and methionyl-tRNAi to the 40S ribosome. The eIF-3 complex specifically targets and initiates translation of a subset of mRNAs involved in cell proliferation. The polypeptide is Eukaryotic translation initiation factor 3 subunit M (Phaeosphaeria nodorum (strain SN15 / ATCC MYA-4574 / FGSC 10173) (Glume blotch fungus)).